The chain runs to 260 residues: Trans-aconitate 2-methyltransferase (260 aa).

The protein belongs to the methyltransferase superfamily. Tam family.

The protein localises to the cytoplasm. The enzyme catalyses trans-aconitate + S-adenosyl-L-methionine = (E)-3-(methoxycarbonyl)pent-2-enedioate + S-adenosyl-L-homocysteine. In terms of biological role, catalyzes the S-adenosylmethionine monomethyl esterification of trans-aconitate. The sequence is that of Trans-aconitate 2-methyltransferase from Methylobacterium radiotolerans (strain ATCC 27329 / DSM 1819 / JCM 2831 / NBRC 15690 / NCIMB 10815 / 0-1).